We begin with the raw amino-acid sequence, 417 residues long: MKLNKLNPRWDAYDRRDSFWLQLLCLKYLGLWPPEDTDQATRNRYIAYGWALRIMFLHLYALTQALYFKDVKDINDIANALFVLMTQVTLIYKLEKFNYNIARIQACLRKLNCTLYHPKQREEFSPVLQSMSGVFWLMIFLMFVAIFTIIMWVMSPAFDNERRLPVPAWFPVDYHHSDIVYGVLFLYQTIGIVMSATYNFSTDTMFSGLMLHINGQIVRLGSMVKKLGHDVPPERQLVATDAEWKEMRKRIDHHSKVYGTMYAKVTECVLFHKDILSFGDEVQDIFQGSIFAQVCASVIIICMTLLQATGDDVTMADLLGCGFYLLVMTSQVFIFCYVGNEISYTTDKFTEFVGFSNYFKFDKRTSQAMIFFLQMTLKDVHIKVGSVLKVTLNLHTFLQIMKLSYSYLAVLQSMESE.

Over 1–2 (MK) the chain is Cytoplasmic. Residues 3 to 23 (LNKLNPRWDAYDRRDSFWLQL) traverse the membrane as a helical segment. At 24–45 (LCLKYLGLWPPEDTDQATRNRY) the chain is on the extracellular side. A helical transmembrane segment spans residues 46–66 (IAYGWALRIMFLHLYALTQAL). The Cytoplasmic segment spans residues 67–73 (YFKDVKD). The chain crosses the membrane as a helical span at residues 74 to 94 (INDIANALFVLMTQVTLIYKL). Residues 95–133 (EKFNYNIARIQACLRKLNCTLYHPKQREEFSPVLQSMSG) lie on the Extracellular side of the membrane. N112 carries N-linked (GlcNAc...) asparagine glycosylation. The chain crosses the membrane as a helical span at residues 134-154 (VFWLMIFLMFVAIFTIIMWVM). At 155-178 (SPAFDNERRLPVPAWFPVDYHHSD) the chain is on the cytoplasmic side. A helical membrane pass occupies residues 179–199 (IVYGVLFLYQTIGIVMSATYN). At 200–284 (FSTDTMFSGL…ILSFGDEVQD (85 aa)) the chain is on the extracellular side. A helical transmembrane segment spans residues 285–305 (IFQGSIFAQVCASVIIICMTL). At 306–317 (LQATGDDVTMAD) the chain is on the cytoplasmic side. Residues 318 to 338 (LLGCGFYLLVMTSQVFIFCYV) form a helical membrane-spanning segment. The Extracellular segment spans residues 339 to 417 (GNEISYTTDK…LAVLQSMESE (79 aa)).

This sequence belongs to the insect chemoreceptor superfamily. Heteromeric odorant receptor channel (TC 1.A.69) family. Or2a subfamily. As to expression, female-specific antennae and maxillary palp expression.

It is found in the cell membrane. Its function is as follows. Odorant receptor which plays a critical role in the anthropophilic host-seeking behavior; establishes the host preference to transmit malaria. May participate in the phenomenon of decreased host-seeking behavior in disease vector mosquitoes after blood feeding. This chain is Odorant receptor Or1 (OR1), found in Anopheles gambiae (African malaria mosquito).